The sequence spans 888 residues: ETO1-like protein 1 (888 aa).

Residues 180 to 280 (KNVVFKIGEE…ACDRELASLI (101 aa)) enclose the BTB domain. 5 TPR repeats span residues 381–414 (VLGF…GHVY), 441–477 (SSVS…DPTL), 511–544 (LECL…CPDY), 637–670 (HERL…KRSF), and 711–744 (GQAL…RHTR). The stretch at 755-793 (LRNDKAAAYEEMTRLIEKAQNNASAYEKRSEYCDRELAK) forms a coiled coil. TPR repeat units follow at residues 807-840 (VYPY…KADL) and 842-873 (LLHL…DPNH).

This sequence belongs to the ETO1 family. As to quaternary structure, interacts with the C-terminal domain of ACS4, ACS5 and ACS9. As to expression, predominantly expressed in flowers.

The protein operates within protein modification; protein ubiquitination. In terms of biological role, possible regulator of the ethylene pathway, which acts by regulating the stability of 1-aminocyclopropane-1-carboxylate synthase (ACS) enzymes. May act as a substrate-specific adapter that connects ACS enzymes, such as ACS5, to ubiquitin ligase complexes, leading to proteasomal degradation of ACS enzymes. The polypeptide is ETO1-like protein 1 (EOL1) (Arabidopsis thaliana (Mouse-ear cress)).